Here is a 784-residue protein sequence, read N- to C-terminus: Copal-8-ol diphosphate hydratase TPSSA9, chloroplastic (784 aa).

Arg240 provides a ligand contact to substrate. Residues Asp372 and Asp374 each coordinate Mg(2+). A DXDD motif motif is present at residues 372–375 (DIDD). Residue Arg459 coordinates substrate.

It belongs to the terpene synthase family.

It is found in the plastid. The protein localises to the chloroplast. The catalysed reaction is (2E,6E,10E)-geranylgeranyl diphosphate + H2O = 8-hydroxycopalyl diphosphate. It functions in the pathway secondary metabolite biosynthesis; terpenoid biosynthesis. Involved in the biosynthesis of labdane-type diterpenoid including sclareol, a diterpene-diol that is used as fragrance and flavoring, and has anticancer effects (able to kill leukemic and colon cancer cells by apoptosis). Sclareol can also be used as synthesis precursor of ambergris substitution fragance products such as ambrox. Terpene synthase that produces 8-hydroxycopalyl diphosphate from geranylgeranyl diphosphate (GGPP). This chain is Copal-8-ol diphosphate hydratase TPSSA9, chloroplastic, found in Salvia sclarea (Clary sage).